A 527-amino-acid polypeptide reads, in one-letter code: Peptide chain release factor 3 (527 aa).

The tr-type G domain occupies 9-277; that stretch reads AKRRTFAIIS…CIVDWAPQPL (269 aa). Residues 18-25, 86-90, and 140-143 each bind GTP; these read SHPDAGKT, DTPGH, and NKLD.

This sequence belongs to the TRAFAC class translation factor GTPase superfamily. Classic translation factor GTPase family. PrfC subfamily.

Its subcellular location is the cytoplasm. Increases the formation of ribosomal termination complexes and stimulates activities of RF-1 and RF-2. It binds guanine nucleotides and has strong preference for UGA stop codons. It may interact directly with the ribosome. The stimulation of RF-1 and RF-2 is significantly reduced by GTP and GDP, but not by GMP. This Pseudomonas aeruginosa (strain LESB58) protein is Peptide chain release factor 3.